A 519-amino-acid chain; its full sequence is Cytochrome P450 52E1 (519 aa).

2 helical membrane-spanning segments follow: residues Ala10–Ile30 and Val44–Leu64. Residue Cys479 participates in heme binding.

It belongs to the cytochrome P450 family. Heme serves as cofactor.

The protein localises to the membrane. Its function is as follows. Together with an NADPH cytochrome P450 the enzyme system catalyzes the terminal hydroxylation as the first step in the assimilation of alkanes and fatty acids. This chain is Cytochrome P450 52E1 (CYP52E1), found in Candida apicola (Yeast).